Reading from the N-terminus, the 341-residue chain is L-threonine 3-dehydrogenase (341 aa).

Zn(2+) is bound at residue cysteine 38. Residues threonine 40 and histidine 43 each act as charge relay system in the active site. Histidine 63, glutamate 64, cysteine 93, cysteine 96, cysteine 99, and cysteine 107 together coordinate Zn(2+). NAD(+) is bound by residues isoleucine 175, aspartate 195, arginine 200, 262–264 (LGI), and 286–287 (IY).

Belongs to the zinc-containing alcohol dehydrogenase family. In terms of assembly, homotetramer. The cofactor is Zn(2+).

It localises to the cytoplasm. The enzyme catalyses L-threonine + NAD(+) = (2S)-2-amino-3-oxobutanoate + NADH + H(+). It functions in the pathway amino-acid degradation; L-threonine degradation via oxydo-reductase pathway; glycine from L-threonine: step 1/2. Catalyzes the NAD(+)-dependent oxidation of L-threonine to 2-amino-3-ketobutyrate. The chain is L-threonine 3-dehydrogenase from Marinomonas sp. (strain MWYL1).